We begin with the raw amino-acid sequence, 338 residues long: tRNA N6-adenosine threonylcarbamoyltransferase (338 aa).

Residues His-111 and His-115 each coordinate Fe cation. Residues 134 to 138 (LVSGG), Asp-167, Gly-180, and Asn-272 each bind substrate. Residue Asp-300 coordinates Fe cation.

The protein belongs to the KAE1 / TsaD family. Requires Fe(2+) as cofactor.

The protein localises to the cytoplasm. It catalyses the reaction L-threonylcarbamoyladenylate + adenosine(37) in tRNA = N(6)-L-threonylcarbamoyladenosine(37) in tRNA + AMP + H(+). Functionally, required for the formation of a threonylcarbamoyl group on adenosine at position 37 (t(6)A37) in tRNAs that read codons beginning with adenine. Is involved in the transfer of the threonylcarbamoyl moiety of threonylcarbamoyl-AMP (TC-AMP) to the N6 group of A37, together with TsaE and TsaB. TsaD likely plays a direct catalytic role in this reaction. The protein is tRNA N6-adenosine threonylcarbamoyltransferase of Shewanella baltica (strain OS155 / ATCC BAA-1091).